Here is a 346-residue protein sequence, read N- to C-terminus: L-threonine dehydratase catabolic TdcB (346 aa).

Position 59–60 (59–60) interacts with AMP; that stretch reads FT. At lysine 64 the chain carries N6-(pyridoxal phosphate)lysine. Residues glutamine 94, 125–126, and asparagine 321 contribute to the AMP site; that span reads GY.

Belongs to the serine/threonine dehydratase family. In the native structure, TdcB is in a dimeric form, whereas in the TdcB-AMP complex, it exists in a tetrameric form (dimer of dimers). Requires pyridoxal 5'-phosphate as cofactor.

It catalyses the reaction L-threonine = 2-oxobutanoate + NH4(+). Its pathway is amino-acid degradation; L-threonine degradation via propanoate pathway; propanoate from L-threonine: step 1/4. With respect to regulation, each protein molecule can bind up to four molecules of AMP, which act as an allosteric activator to the enzyme. Catalyzes the anaerobic formation of alpha-ketobutyrate and ammonia from threonine in a two-step reaction. The first step involved a dehydration of threonine and a production of enamine intermediates (aminocrotonate), which tautomerizes to its imine form (iminobutyrate). Both intermediates are unstable and short-lived. The second step is the nonenzymatic hydrolysis of the enamine/imine intermediates to form 2-ketobutyrate and free ammonia. In the low water environment of the cell, the second step is accelerated by RidA. The protein is L-threonine dehydratase catabolic TdcB (tdcB) of Staphylococcus aureus (strain bovine RF122 / ET3-1).